The following is a 373-amino-acid chain: MIELVTDSPHPIHLVDSLQNPKLFASLSTDFPLIFITNTKLNTLILPPLLDLARSLGFSVETLTIPEGEETKTGDTFLSLHQQLTDLNVPRQATLIGVGGGVILDIAGFVAATHCRGMPFIAIPTTLVAMIDASIGGKNGINLNHIKNRIGSFYLPKAVWICPRKLSFLPQQELHHGIAECIKHAYIADSAILPLLQDPNALKKEDKLSLLIKKNCLCKASVVQQDVRDYAKRQILNFGHTLGHALEMLFIGKIPHSCAISVGMVLETKLSLSLGVARSPAILHSLIQDLLRYQLPVSLKDLYMRAQIPPHNCDQILSALTYDKKKQNTPLPPFVMIEEIGLAASFDGRFCQTISKHILTKVLEEEFYAMHNN.

Residues Glu67–Lys72, Gly101–Asp105, Thr125–Thr126, Lys138, and Lys147 contribute to the NAD(+) site. Residues Glu180, His240, and His256 each contribute to the Zn(2+) site.

It belongs to the sugar phosphate cyclases superfamily. Dehydroquinate synthase family. It depends on NAD(+) as a cofactor. Co(2+) serves as cofactor. Zn(2+) is required as a cofactor.

The protein localises to the cytoplasm. The enzyme catalyses 7-phospho-2-dehydro-3-deoxy-D-arabino-heptonate = 3-dehydroquinate + phosphate. The protein operates within metabolic intermediate biosynthesis; chorismate biosynthesis; chorismate from D-erythrose 4-phosphate and phosphoenolpyruvate: step 2/7. Functionally, catalyzes the conversion of 3-deoxy-D-arabino-heptulosonate 7-phosphate (DAHP) to dehydroquinate (DHQ). This is 3-dehydroquinate synthase from Chlamydia trachomatis serovar L2 (strain ATCC VR-902B / DSM 19102 / 434/Bu).